We begin with the raw amino-acid sequence, 436 residues long: Gamma-glutamyl phosphate reductase (436 aa).

It belongs to the gamma-glutamyl phosphate reductase family.

The protein localises to the cytoplasm. It carries out the reaction L-glutamate 5-semialdehyde + phosphate + NADP(+) = L-glutamyl 5-phosphate + NADPH + H(+). It functions in the pathway amino-acid biosynthesis; L-proline biosynthesis; L-glutamate 5-semialdehyde from L-glutamate: step 2/2. Its function is as follows. Catalyzes the NADPH-dependent reduction of L-glutamate 5-phosphate into L-glutamate 5-semialdehyde and phosphate. The product spontaneously undergoes cyclization to form 1-pyrroline-5-carboxylate. The sequence is that of Gamma-glutamyl phosphate reductase from Prochlorococcus marinus subsp. pastoris (strain CCMP1986 / NIES-2087 / MED4).